Reading from the N-terminus, the 351-residue chain is DNA polymerase IV (351 aa).

The UmuC domain occupies 4–185 (IIHIDMDCFF…LPLAKIPGVG (182 aa)). The Mg(2+) site is built by Asp8 and Asp103. Residue Glu104 is part of the active site.

The protein belongs to the DNA polymerase type-Y family. Monomer. It depends on Mg(2+) as a cofactor.

It localises to the cytoplasm. The catalysed reaction is DNA(n) + a 2'-deoxyribonucleoside 5'-triphosphate = DNA(n+1) + diphosphate. Poorly processive, error-prone DNA polymerase involved in untargeted mutagenesis. Copies undamaged DNA at stalled replication forks, which arise in vivo from mismatched or misaligned primer ends. These misaligned primers can be extended by PolIV. Exhibits no 3'-5' exonuclease (proofreading) activity. May be involved in translesional synthesis, in conjunction with the beta clamp from PolIII. In Salmonella paratyphi A (strain ATCC 9150 / SARB42), this protein is DNA polymerase IV.